A 158-amino-acid chain; its full sequence is Putative ribosomal RNA large subunit methyltransferase H (158 aa).

S-adenosyl-L-methionine is bound by residues Leu76, Gly107, and 126-131 (LSRMTF).

Belongs to the RNA methyltransferase RlmH family.

The protein localises to the cytoplasm. The enzyme catalyses pseudouridine(1915) in 23S rRNA + S-adenosyl-L-methionine = N(3)-methylpseudouridine(1915) in 23S rRNA + S-adenosyl-L-homocysteine + H(+). Specifically methylates the pseudouridine at position 1915 (m3Psi1915) in 23S rRNA. This is Putative ribosomal RNA large subunit methyltransferase H from Methanocorpusculum labreanum (strain ATCC 43576 / DSM 4855 / Z).